A 161-amino-acid chain; its full sequence is SsrA-binding protein (161 aa).

This sequence belongs to the SmpB family.

It localises to the cytoplasm. Functionally, required for rescue of stalled ribosomes mediated by trans-translation. Binds to transfer-messenger RNA (tmRNA), required for stable association of tmRNA with ribosomes. tmRNA and SmpB together mimic tRNA shape, replacing the anticodon stem-loop with SmpB. tmRNA is encoded by the ssrA gene; the 2 termini fold to resemble tRNA(Ala) and it encodes a 'tag peptide', a short internal open reading frame. During trans-translation Ala-aminoacylated tmRNA acts like a tRNA, entering the A-site of stalled ribosomes, displacing the stalled mRNA. The ribosome then switches to translate the ORF on the tmRNA; the nascent peptide is terminated with the 'tag peptide' encoded by the tmRNA and targeted for degradation. The ribosome is freed to recommence translation, which seems to be the essential function of trans-translation. In Vesicomyosocius okutanii subsp. Calyptogena okutanii (strain HA), this protein is SsrA-binding protein.